We begin with the raw amino-acid sequence, 266 residues long: Undecaprenyl-diphosphatase (266 aa).

Transmembrane regions (helical) follow at residues 1–21, 39–59, 87–107, 111–131, 150–172, 187–207, 218–238, and 244–264; these read MTLT…FLPI, QGLA…MIYF, WWVI…KAFI, ARSA…LWYA, LIVG…ITMT, FSFL…TLDL, ALIV…YLFL, and IGML…LLFV.

This sequence belongs to the UppP family.

It localises to the cell inner membrane. It carries out the reaction di-trans,octa-cis-undecaprenyl diphosphate + H2O = di-trans,octa-cis-undecaprenyl phosphate + phosphate + H(+). Its function is as follows. Catalyzes the dephosphorylation of undecaprenyl diphosphate (UPP). Confers resistance to bacitracin. This Pseudoalteromonas atlantica (strain T6c / ATCC BAA-1087) protein is Undecaprenyl-diphosphatase.